We begin with the raw amino-acid sequence, 292 residues long: Zinc finger protein SNAI3 (292 aa).

The tract at residues 1-20 (MPRSFLVKTHSSHRVPNYRR) is SNAG domain. 4 consecutive C2H2-type zinc fingers follow at residues 152-174 (FECF…RQLH), 183-205 (FTCK…IRTH), 209-231 (CTCK…VRTH), and 237-259 (YACS…LQTH). The segment at 265-287 (YRCRRCTKTFSRMSLLARHEESG) adopts a C2H2-type 5; degenerate zinc-finger fold.

The protein belongs to the snail C2H2-type zinc-finger protein family.

Its subcellular location is the nucleus. In terms of biological role, seems to inhibit myoblast differentiation. Transcriptional repressor of E-box-dependent transactivation of downstream myogenic bHLHs genes. Binds preferentially to the canonical E-box sequences 5'-CAGGTG-3' and 5'-CACCTG-3'. In Homo sapiens (Human), this protein is Zinc finger protein SNAI3 (SNAI3).